Consider the following 469-residue polypeptide: Ectonucleoside triphosphate diphosphohydrolase 5 (469 aa).

The N-terminal stretch at 1 to 24 is a signal peptide; sequence MATPWGAVFFLLMIACAGSTVFYR. Residue Glu172 is the Proton acceptor of the active site. A glycan (N-linked (GlcNAc...) asparagine) is linked at Asn232. 2 disulfide bridges follow: Cys272-Cys303 and Cys363-Cys377.

The protein belongs to the GDA1/CD39 NTPase family. As to quaternary structure, monomer; active form. Homodimer; disulfide-linked. Homodimers are enzymatically inactive. The cofactor is Ca(2+). It depends on Mg(2+) as a cofactor. In terms of processing, N-glycosylated; high-mannose type. Expressed in fetal cells and most adult tissues.

The protein resides in the endoplasmic reticulum. Its subcellular location is the secreted. It carries out the reaction a ribonucleoside 5'-diphosphate + H2O = a ribonucleoside 5'-phosphate + phosphate + H(+). It catalyses the reaction GDP + H2O = GMP + phosphate + H(+). The catalysed reaction is UDP + H2O = UMP + phosphate + H(+). The enzyme catalyses IDP + H2O = IMP + phosphate + H(+). It carries out the reaction CDP + H2O = CMP + phosphate + H(+). It catalyses the reaction ADP + H2O = AMP + phosphate + H(+). It participates in protein modification; protein glycosylation. Hydrolyzes nucleoside diphosphates with a preference for GDP, IDP and UDP compared to ADP and CDP. In the lumen of the endoplasmic reticulum, hydrolyzes UDP that acts as an end-product feedback inhibitor of the UDP-Glc:glycoprotein glucosyltransferases. UMP can be transported back by an UDP-sugar antiporter to the cytosol where it is consumed to regenerate UDP-glucose. Therefore, it positively regulates protein reglucosylation by clearing UDP from the ER lumen and by promoting the regeneration of UDP-glucose. Protein reglucosylation is essential to proper glycoprotein folding and quality control in the ER. The chain is Ectonucleoside triphosphate diphosphohydrolase 5 (ENTPD5) from Mesocricetus auratus (Golden hamster).